The primary structure comprises 553 residues: 5'-nucleotidase domain-containing protein 2 (553 aa).

Residues 26–51 are disordered; that stretch reads SSSPSCPGCGPPGPGAHCPSTPRSAP. D106 functions as the Nucleophile in the catalytic mechanism. 3 residues coordinate Mg(2+): D106, D108, and D391. Residue D108 is the Proton donor of the active site.

It belongs to the 5'(3')-deoxyribonucleotidase family. As to quaternary structure, interacts with tyrosine 3-monooxygenase TH; the interaction results in reduced phosphorylation and decreased catalytic activity of TH. Expressed in eye iridocorneal angle.

It localises to the cytoplasm. In terms of biological role, promotes dephosphorylation of tyrosine 3-monooxygenase TH which decreases TH catalytic activity and leads to reduced synthesis of catecholamines including dopamine, noradrenaline and adrenaline. The exact mechanism of activity is unknown but may act as a phosphatase or promote the activity of phosphatases or may inhibit phosphorylation by acting as a barrier to interfere with protein kinase access. The protein is 5'-nucleotidase domain-containing protein 2 (Nt5dc2) of Rattus norvegicus (Rat).